We begin with the raw amino-acid sequence, 189 residues long: Probable hydrogen peroxide-inducible genes activator (189 aa).

The 58-residue stretch at 8–65 folds into the HTH lysR-type domain; sequence PTLAGLRAFAAVAEKQHFGSAASALGVNQSTLSQALAGLESGLGVRLIERSTRRVFLT. The segment at residues 25-44 is a DNA-binding region (H-T-H motif); the sequence is FGSAASALGVNQSTLSQALA.

Belongs to the LysR transcriptional regulatory family.

In terms of biological role, required for the induction the katG gene for catalase. Involved in the response to hydrogen peroxide. The chain is Probable hydrogen peroxide-inducible genes activator (oxyR) from Mycobacterium xenopi.